We begin with the raw amino-acid sequence, 107 residues long: MIIVTNTAKITKGNGHKLIERFNKVGKVETMPGFLGLEVLLTQNTVDYDEVTISTRWNAKEDFQGWTKSAAFKDAHSHQGGMPEYILDNKIAYYDVKVVRMPMAAAQ.

The 93-residue stretch at 2-94 (IIVTNTAKIT…YILDNKIAYY (93 aa)) folds into the ABM domain. Fe cation is bound at residue N6. Residue H76 participates in heme binding.

Belongs to the antibiotic biosynthesis monooxygenase family. Heme-degrading monooxygenase IsdG subfamily. As to quaternary structure, homodimer.

The protein resides in the cytoplasm. The catalysed reaction is heme b + 3 reduced [NADPH--hemoprotein reductase] + 3 O2 = biliverdin IXalpha + CO + Fe(2+) + 3 oxidized [NADPH--hemoprotein reductase] + 3 H2O + H(+). Functionally, allows bacterial pathogens to use the host heme as an iron source. Catalyzes the oxidative degradation of the heme macrocyclic porphyrin ring to the biliverdin in the presence of a suitable electron donor such as ascorbate or NADPH--cytochrome P450 reductase, with subsequent release of free iron. This is Heme-degrading monooxygenase from Bacillus cereus (strain ATCC 14579 / DSM 31 / CCUG 7414 / JCM 2152 / NBRC 15305 / NCIMB 9373 / NCTC 2599 / NRRL B-3711).